Here is a 200-residue protein sequence, read N- to C-terminus: Oligoribonuclease (200 aa).

Positions 20–183 (LVWLDMEMTG…ADIHESIDEL (164 aa)) constitute an Exonuclease domain. Tyr-141 is an active-site residue.

The protein belongs to the oligoribonuclease family.

It is found in the cytoplasm. Functionally, 3'-to-5' exoribonuclease specific for small oligoribonucleotides. This is Oligoribonuclease from Burkholderia vietnamiensis (strain G4 / LMG 22486) (Burkholderia cepacia (strain R1808)).